Reading from the N-terminus, the 147-residue chain is MRYAPEFKKSPSHLLKKFAVCDIPLYDICDYNVSRDRCKELGCCFYKGICYEKAVPSYVQVFSALIVIIAGAFVITIIYRVIQESRREKEVPTEAPVSAKSSVQVETQPPSSAGAGSKAPSVERPQSKESGREDASLIVTEEEETED.

The Extracellular segment spans residues 1-57 (MRYAPEFKKSPSHLLKKFAVCDIPLYDICDYNVSRDRCKELGCCFYKGICYEKAVPS). The chain crosses the membrane as a helical span at residues 58 to 78 (YVQVFSALIVIIAGAFVITII). Residues 79–147 (YRVIQESRRE…IVTEEEETED (69 aa)) lie on the Cytoplasmic side of the membrane. The segment at 86–147 (RREKEVPTEA…IVTEEEETED (62 aa)) is disordered. Polar residues predominate over residues 99–108 (AKSSVQVETQ). A compositionally biased stretch (low complexity) spans 109–120 (PPSSAGAGSKAP). The span at 125–135 (PQSKESGREDA) shows a compositional bias: basic and acidic residues.

It localises to the membrane. In Bos taurus (Bovine), this protein is Testis-expressed protein 29 (TEX29).